Here is a 344-residue protein sequence, read N- to C-terminus: Phosphate acyltransferase (344 aa).

Belongs to the PlsX family. Homodimer. Probably interacts with PlsY.

The protein localises to the cytoplasm. The enzyme catalyses a fatty acyl-[ACP] + phosphate = an acyl phosphate + holo-[ACP]. Its pathway is lipid metabolism; phospholipid metabolism. In terms of biological role, catalyzes the reversible formation of acyl-phosphate (acyl-PO(4)) from acyl-[acyl-carrier-protein] (acyl-ACP). This enzyme utilizes acyl-ACP as fatty acyl donor, but not acyl-CoA. This is Phosphate acyltransferase from Yersinia pestis bv. Antiqua (strain Antiqua).